Consider the following 274-residue polypeptide: NADPH-dependent 7-cyano-7-deazaguanine reductase (274 aa).

Substrate is bound at residue Val80–Ser82. Ser82–Lys83 lines the NADPH pocket. The active-site Thioimide intermediate is the Cys181. Residue Asp188 is the Proton donor of the active site. His220–Glu221 provides a ligand contact to substrate. Arg249 to Gly250 lines the NADPH pocket.

Belongs to the GTP cyclohydrolase I family. QueF type 2 subfamily. Homodimer.

The protein resides in the cytoplasm. It catalyses the reaction 7-aminomethyl-7-carbaguanine + 2 NADP(+) = 7-cyano-7-deazaguanine + 2 NADPH + 3 H(+). It functions in the pathway tRNA modification; tRNA-queuosine biosynthesis. In terms of biological role, catalyzes the NADPH-dependent reduction of 7-cyano-7-deazaguanine (preQ0) to 7-aminomethyl-7-deazaguanine (preQ1). The protein is NADPH-dependent 7-cyano-7-deazaguanine reductase of Burkholderia pseudomallei (strain 1710b).